Here is a 160-residue protein sequence, read N- to C-terminus: Transcription elongation factor GreA (160 aa).

This sequence belongs to the GreA/GreB family.

In terms of biological role, necessary for efficient RNA polymerase transcription elongation past template-encoded arresting sites. The arresting sites in DNA have the property of trapping a certain fraction of elongating RNA polymerases that pass through, resulting in locked ternary complexes. Cleavage of the nascent transcript by cleavage factors such as GreA or GreB allows the resumption of elongation from the new 3'terminus. GreA releases sequences of 2 to 3 nucleotides. This chain is Transcription elongation factor GreA, found in Francisella tularensis subsp. tularensis (strain FSC 198).